Reading from the N-terminus, the 225-residue chain is Holliday junction branch migration complex subunit RuvA (225 aa).

The tract at residues 1–71 (MISWINGDLV…EDSDLLFGFT (71 aa)) is domain I. Residues 72 to 150 (SNEQKNFFIE…SEILSEEEKS (79 aa)) form a domain II region. Residues 151-161 (KGELEIKDPEI) are flexible linker. Residues 161-225 (INKMIEDLQL…LDEDSSNIAR (65 aa)) are domain III.

It belongs to the RuvA family. In terms of assembly, homotetramer. Forms an RuvA(8)-RuvB(12)-Holliday junction (HJ) complex. HJ DNA is sandwiched between 2 RuvA tetramers; dsDNA enters through RuvA and exits via RuvB. An RuvB hexamer assembles on each DNA strand where it exits the tetramer. Each RuvB hexamer is contacted by two RuvA subunits (via domain III) on 2 adjacent RuvB subunits; this complex drives branch migration. In the full resolvosome a probable DNA-RuvA(4)-RuvB(12)-RuvC(2) complex forms which resolves the HJ.

It localises to the cytoplasm. The RuvA-RuvB-RuvC complex processes Holliday junction (HJ) DNA during genetic recombination and DNA repair, while the RuvA-RuvB complex plays an important role in the rescue of blocked DNA replication forks via replication fork reversal (RFR). RuvA specifically binds to HJ cruciform DNA, conferring on it an open structure. The RuvB hexamer acts as an ATP-dependent pump, pulling dsDNA into and through the RuvAB complex. HJ branch migration allows RuvC to scan DNA until it finds its consensus sequence, where it cleaves and resolves the cruciform DNA. This is Holliday junction branch migration complex subunit RuvA from Prochlorococcus marinus (strain MIT 9301).